The following is a 289-amino-acid chain: Glucosamine-6-phosphate deaminase 1 (289 aa).

Lys64 carries the post-translational modification N6-acetyllysine. Asp72 (proton acceptor; for enolization step) is an active-site residue. Residue Asp141 is the For ring-opening step of the active site. The active-site Proton acceptor; for ring-opening step is the His143. Glu148 acts as the For ring-opening step in catalysis. Thr161 carries the phosphothreonine modification.

Belongs to the glucosamine/galactosamine-6-phosphate isomerase family. Homohexamer.

The protein resides in the cytoplasm. The catalysed reaction is alpha-D-glucosamine 6-phosphate + H2O = beta-D-fructose 6-phosphate + NH4(+). It functions in the pathway nucleotide-sugar biosynthesis; UDP-N-acetyl-alpha-D-glucosamine biosynthesis; alpha-D-glucosamine 6-phosphate from D-fructose 6-phosphate: step 1/1. Its activity is regulated as follows. Allosterically activated by N-acetylglucosamine-6-phosphate (GlcNAc6P). Functionally, catalyzes the reversible conversion of alpha-D-glucosamine 6-phosphate (GlcN-6P) into beta-D-fructose 6-phosphate (Fru-6P) and ammonium ion, a regulatory reaction step in de novo uridine diphosphate-N-acetyl-alpha-D-glucosamine (UDP-GlcNAc) biosynthesis via hexosamine pathway. Deamination is coupled to aldo-keto isomerization mediating the metabolic flux from UDP-GlcNAc toward Fru-6P. At high ammonium level can drive amination and isomerization of Fru-6P toward hexosamines and UDP-GlcNAc synthesis. Has a role in fine tuning the metabolic fluctuations of cytosolic UDP-GlcNAc and their effects on hyaluronan synthesis that occur during tissue remodeling. Seems to trigger calcium oscillations in mammalian eggs. These oscillations serve as the essential trigger for egg activation and early development of the embryo. This chain is Glucosamine-6-phosphate deaminase 1, found in Pongo abelii (Sumatran orangutan).